The primary structure comprises 138 residues: Transposon Tn10 TetD protein (138 aa).

Residues Lys31–Asn129 form the HTH araC/xylS-type domain. 2 DNA-binding regions (H-T-H motif) span residues Asp48–Thr69 and Ile96–Phe119.

In Escherichia coli, this protein is Transposon Tn10 TetD protein (tetD).